The primary structure comprises 298 residues: ADP/ATP translocase 1 (298 aa).

The Mitochondrial intermembrane segment spans residues 1 to 7 (MGDQALS). N-acetylglycine is present on glycine 2. The Solcar 1 repeat unit spans residues 6-98 (LSFLKDFLAG…FAFKDKYKQI (93 aa)). Serine 7 is subject to Phosphoserine. The helical transmembrane segment at 8 to 37 (FLKDFLAGGIAAAVSKTAVAPIERVKLLLQ) threads the bilayer. Over 38–74 (VQHASKQISAEKQYKGIIDCVVRIPKEQGFLSFWRGN) the chain is Mitochondrial matrix. Lysine 52 carries the N6,N6,N6-trimethyllysine modification. Residues 75–99 (LANVIRYFPTQALNFAFKDKYKQIF) traverse the membrane as a helical segment. ADP-binding residues include arginine 80 and lysine 92. Over 100-109 (LGGVDRHKQF) the chain is Mitochondrial intermembrane. A helical transmembrane segment spans residues 110–130 (WRYFAGNLASGGAAGATSLCF). Solcar repeat units lie at residues 111 to 201 (RYFA…AKGM) and 212 to 297 (VSWM…IKKY). The Mitochondrial matrix portion of the chain corresponds to 131–178 (VYPLDFARTRLAADVGKGSSQREFNGLGDCLTKIFKSDGLKGLYQGFS). An N6-succinyllysine modification is found at lysine 147. Serine 149 and serine 150 each carry phosphoserine. Cysteine 160 is subject to S-nitrosocysteine. Residues 179 to 199 (VSVQGIIIYRAAYFGVYDTAK) traverse the membrane as a helical segment. The Mitochondrial intermembrane portion of the chain corresponds to 200–210 (GMLPDPKNVHI). A helical transmembrane segment spans residues 211–231 (IVSWMIAQSVTAVAGLVSYPF). Residues 232–273 (DTVRRRMMMQSGRKGADIMYTGTVDCWRKIAKDEGRKAFFKG) lie on the Mitochondrial matrix side of the membrane. An ADP-binding site is contributed by arginine 235. Residues 235 to 240 (RRRMMM) are important for transport activity. The Nucleotide carrier signature motif signature appears at 235 to 240 (RRRMMM). Residues lysine 245 and lysine 272 each carry the N6-succinyllysine modification. Residues 274–291 (AWSNVLRGMGGAFVLVLY) traverse the membrane as a helical segment. At 292–298 (DEIKKYV) the chain is on the mitochondrial intermembrane side.

The protein belongs to the mitochondrial carrier (TC 2.A.29) family. In terms of assembly, monomer. Found in a complex with ARL2, ARL2BP and SLC25A4/ANT1. Interacts with ARL2BP. Interacts with TIMM44; leading to inhibit the presequence translocase TIMM23, thereby promoting stabilization of PINK1. In terms of processing, under cell death induction, transglutaminated by TGM2. Transglutamination leads to formation of covalent cross-links between a glutamine and the epsilon-amino group of a lysine residue, forming polymers.

The protein resides in the mitochondrion inner membrane. It localises to the membrane. It carries out the reaction ADP(in) + ATP(out) = ADP(out) + ATP(in). The catalysed reaction is H(+)(in) = H(+)(out). With respect to regulation, the matrix-open state (m-state) is inhibited by the membrane-permeable bongkrekic acid (BKA). The cytoplasmic-open state (c-state) is inhibited by the membrane-impermeable toxic inhibitor carboxyatractyloside (CATR). Proton transporter activity is inhibited by ADP:ATP antiporter activity. Its function is as follows. ADP:ATP antiporter that mediates import of ADP into the mitochondrial matrix for ATP synthesis, and export of ATP out to fuel the cell. Cycles between the cytoplasmic-open state (c-state) and the matrix-open state (m-state): operates by the alternating access mechanism with a single substrate-binding site intermittently exposed to either the cytosolic (c-state) or matrix (m-state) side of the inner mitochondrial membrane. In addition to its ADP:ATP antiporter activity, also involved in mitochondrial uncoupling and mitochondrial permeability transition pore (mPTP) activity. Plays a role in mitochondrial uncoupling by acting as a proton transporter: proton transport uncouples the proton flows via the electron transport chain and ATP synthase to reduce the efficiency of ATP production and cause mitochondrial thermogenesis. Proton transporter activity is inhibited by ADP:ATP antiporter activity, suggesting that SLC25A4/ANT1 acts as a master regulator of mitochondrial energy output by maintaining a delicate balance between ATP production (ADP:ATP antiporter activity) and thermogenesis (proton transporter activity). Proton transporter activity requires free fatty acids as cofactor, but does not transport it. Also plays a key role in mPTP opening, a non-specific pore that enables free passage of the mitochondrial membranes to solutes of up to 1.5 kDa, and which contributes to cell death. It is however unclear if SLC25A4/ANT1 constitutes a pore-forming component of mPTP or regulates it. Acts as a regulator of mitophagy independently of ADP:ATP antiporter activity: promotes mitophagy via interaction with TIMM44, leading to inhibit the presequence translocase TIMM23, thereby promoting stabilization of PINK1. The protein is ADP/ATP translocase 1 of Rattus norvegicus (Rat).